We begin with the raw amino-acid sequence, 371 residues long: Putative agmatine deiminase (371 aa).

C361 acts as the Amidino-cysteine intermediate in catalysis.

It belongs to the agmatine deiminase family.

The catalysed reaction is agmatine + H2O = N-carbamoylputrescine + NH4(+). This Selenomonas ruminantium protein is Putative agmatine deiminase.